Reading from the N-terminus, the 288-residue chain is Dysbindin protein homolog (288 aa).

Residues 147-239 (AQLQNSSQVL…QRERQAVFDD (93 aa)) adopt a coiled-coil conformation.

Belongs to the dysbindin family. In terms of assembly, component of the biogenesis of lysosome-related organelles complex-1 (BLOC-1) composed of Blos1, Blos2, Blos3, Blos4, Dysb, Muted, Pldn and Snapin. Interacts with Pldn and Snapin.

Functionally, component of the biogenesis of lysosome-related organelles complex-1 (BLOC-1) involved in pigment granule biogenesis and membrane trafficking in synapses. In response to high synaptic activity at neuromuscular junctions, stabilizes Pldn protein levels and, together with Pldn, plays a role in promoting efficient synaptic vesicle recycling and re-formation through early endosomes. The chain is Dysbindin protein homolog from Drosophila melanogaster (Fruit fly).